Here is a 3336-residue protein sequence, read N- to C-terminus: Pericentrin (3336 aa).

Disordered regions lie at residues 1–71 (MEVE…DICK) and 81–100 (GAGG…KRED). Positions 27 to 37 (TKGDSSHSEKK) are enriched in basic and acidic residues. Position 44 is a phosphoserine (Ser-44). The residue at position 188 (Ser-188) is a Phosphoserine. Phosphothreonine is present on Thr-191. Residues 258–553 (HTAQLELTQA…RLQGAREDAL (296 aa)) adopt a coiled-coil conformation. The interval 569–589 (KPEKGRKDHVDELEPERHKES) is disordered. Ser-610 and Ser-682 each carry phosphoserine. Coiled coils occupy residues 675-835 (TEHK…DALH) and 1010-1146 (TILT…MLKA). Position 1245 is a phosphoserine (Ser-1245). Positions 1299-1949 (NEETAQVVRK…FLRCQVELDR (651 aa)) form a coiled coil. The segment at 1619–1638 (TLDAGRCPEPPSGSPPEGPE) is disordered. Pro residues predominate over residues 1626 to 1636 (PEPPSGSPPEG). Phosphoserine is present on residues Ser-1653 and Ser-1712. The disordered stretch occupies residues 1954-1974 (RATAHTRVPGAHPQPRMDGGA). Position 2044 is a phosphoserine (Ser-2044). The stretch at 2064–2082 (VDLVAQVKQLQEKLNRLLY) forms a coiled coil. The tract at residues 2168–2214 (SLIPDEMPDSPIQEKSECQDMSLSSPTSVLGGSRHQSHTAEAGPRKS) is disordered. Phosphoserine is present on residues Ser-2177, Ser-2192, Ser-2225, Ser-2226, and Ser-2327. Positions 2186–2197 (QDMSLSSPTSVL) are enriched in polar residues. The tract at residues 2318–2374 (SFDSQETLSSPPPGLEGKADRSEKSDGSGFGARLSPGSGGPEAQTAGPVTPASISGR) is disordered. Positions 2334–2343 (GKADRSEKSD) are enriched in basic and acidic residues. Phosphoserine occurs at positions 2352, 2355, 2477, and 2486. Residues 2536 to 3086 (QEKLQHLRTA…EKLLKHHLQK (551 aa)) adopt a coiled-coil conformation. 2 disordered regions span residues 2875–2910 (LEQS…WRKW) and 3084–3126 (LQKG…EEAH). Composition is skewed to basic and acidic residues over residues 2876–2896 (EQSH…RSAE) and 3092–3102 (RSERSAWKPDE). Residues 2983-3246 (LSAARLLTSF…ARQPQSPPRT (264 aa)) form an interaction with NEK2 region. The calmodulin-binding stretch occupies residues 3195 to 3208 (RFRTAVRVVIAILR). Residues 3224–3300 (ALAQGKAPRP…RSLTASQDPE (77 aa)) are disordered. Over residues 3226 to 3240 (AQGKAPRPGPRARQP) the composition is skewed to low complexity. Positions 3283 to 3297 (PSPNSRLERSLTASQ) are enriched in polar residues. Ser-3302 carries the post-translational modification Phosphoserine.

As to quaternary structure, interacts with CHD3. Interacts with CHD4; the interaction regulates centrosome integrity. Interacts with DISC1 and PCM1. Binds calmodulin. Interacts with CDK5RAP2; the interaction is leading to centrosomal localization of PCNT and CDK5RAP2. Interacts with isoform 1 of NEK2. Interacts with CEP131. Interacts with CCDC13. Interacts with CEP68. Interacts with ATF5; the ATF5:PCNT:polyglutamylated tubulin (PGT) tripartite unites the mother centriole and the pericentriolar material (PCM) in the centrosome. Post-translationally, cleaved during mitotis which leads to removal of CDK5RAP2 from the centrosome and promotes centriole disengagement and subsequent centriole separation. The C-terminal fragment is rapidly degraded following cleavage. In terms of processing, ubiquitinated by TRIM43; leading to proteasomal degradation. As to expression, expressed in all tissues tested, including placenta, liver, kidney and thymus.

The protein resides in the cytoplasm. It is found in the cytoskeleton. It localises to the microtubule organizing center. Its subcellular location is the centrosome. Functionally, integral component of the filamentous matrix of the centrosome involved in the initial establishment of organized microtubule arrays in both mitosis and meiosis. Plays a role, together with DISC1, in the microtubule network formation. Is an integral component of the pericentriolar material (PCM). May play an important role in preventing premature centrosome splitting during interphase by inhibiting NEK2 kinase activity at the centrosome. This chain is Pericentrin (PCNT), found in Homo sapiens (Human).